A 186-amino-acid polypeptide reads, in one-letter code: ATP synthase subunit delta (186 aa).

It belongs to the ATPase delta chain family. F-type ATPases have 2 components, F(1) - the catalytic core - and F(0) - the membrane proton channel. F(1) has five subunits: alpha(3), beta(3), gamma(1), delta(1), epsilon(1). CF(0) has four main subunits: a(1), b(1), b'(1) and c(10-14). The alpha and beta chains form an alternating ring which encloses part of the gamma chain. F(1) is attached to F(0) by a central stalk formed by the gamma and epsilon chains, while a peripheral stalk is formed by the delta, b and b' chains.

It is found in the cell inner membrane. F(1)F(0) ATP synthase produces ATP from ADP in the presence of a proton or sodium gradient. F-type ATPases consist of two structural domains, F(1) containing the extramembraneous catalytic core and F(0) containing the membrane proton channel, linked together by a central stalk and a peripheral stalk. During catalysis, ATP synthesis in the catalytic domain of F(1) is coupled via a rotary mechanism of the central stalk subunits to proton translocation. In terms of biological role, this protein is part of the stalk that links CF(0) to CF(1). It either transmits conformational changes from CF(0) to CF(1) or is implicated in proton conduction. This Rhodopseudomonas palustris (strain BisB18) protein is ATP synthase subunit delta.